The following is a 183-amino-acid chain: Ribose 1,5-bisphosphate phosphokinase PhnN (183 aa).

Belongs to the ribose 1,5-bisphosphokinase family.

It catalyses the reaction alpha-D-ribose 1,5-bisphosphate + ATP = 5-phospho-alpha-D-ribose 1-diphosphate + ADP. Its pathway is metabolic intermediate biosynthesis; 5-phospho-alpha-D-ribose 1-diphosphate biosynthesis; 5-phospho-alpha-D-ribose 1-diphosphate from D-ribose 5-phosphate (route II): step 3/3. In terms of biological role, catalyzes the phosphorylation of ribose 1,5-bisphosphate to 5-phospho-D-ribosyl alpha-1-diphosphate (PRPP). This chain is Ribose 1,5-bisphosphate phosphokinase PhnN, found in Azotobacter vinelandii (strain DJ / ATCC BAA-1303).